A 124-amino-acid chain; its full sequence is Small ribosomal subunit protein bS16 (124 aa).

Residues 88-124 (VPEQTKQAQPKAKAQERLREAEEKARAAAEAAASAEG) form a disordered region. Over residues 100–114 (KAQERLREAEEKARA) the composition is skewed to basic and acidic residues. Positions 115–124 (AAEAAASAEG) are enriched in low complexity.

It belongs to the bacterial ribosomal protein bS16 family.

The chain is Small ribosomal subunit protein bS16 from Rhodospirillum rubrum (strain ATCC 11170 / ATH 1.1.1 / DSM 467 / LMG 4362 / NCIMB 8255 / S1).